Consider the following 140-residue polypeptide: uncharacterized protein (140 aa).

This is an uncharacterized protein from Saccharomyces cerevisiae (strain ATCC 204508 / S288c) (Baker's yeast).